A 378-amino-acid chain; its full sequence is Chaperone protein DnaJ (378 aa).

One can recognise a J domain in the interval 5 to 70; it reads DYYEVLGVAK…QKRAAYDQYG (66 aa). A CR-type zinc finger spans residues 138–216; the sequence is GYDTQIRVPS…CHGSGKVKET (79 aa). Residues Cys151, Cys154, Cys168, Cys171, Cys190, Cys193, Cys204, and Cys207 each contribute to the Zn(2+) site. CXXCXGXG motif repeat units lie at residues 151–158, 168–175, 190–197, and 204–211; these read CEVCHGSG, CPTCHGQG, CPKCHGTG, and CVHCHGSG.

This sequence belongs to the DnaJ family. Homodimer. It depends on Zn(2+) as a cofactor.

The protein resides in the cytoplasm. Functionally, participates actively in the response to hyperosmotic and heat shock by preventing the aggregation of stress-denatured proteins and by disaggregating proteins, also in an autonomous, DnaK-independent fashion. Unfolded proteins bind initially to DnaJ; upon interaction with the DnaJ-bound protein, DnaK hydrolyzes its bound ATP, resulting in the formation of a stable complex. GrpE releases ADP from DnaK; ATP binding to DnaK triggers the release of the substrate protein, thus completing the reaction cycle. Several rounds of ATP-dependent interactions between DnaJ, DnaK and GrpE are required for fully efficient folding. Also involved, together with DnaK and GrpE, in the DNA replication of plasmids through activation of initiation proteins. This is Chaperone protein DnaJ from Burkholderia ambifaria (strain MC40-6).